Consider the following 308-residue polypeptide: Hydroxyacylglutathione hydrolase, mitochondrial (308 aa).

Residues 1–13 constitute a mitochondrion transit peptide; the sequence is MVVGRGLLGRRSL. Residues H102, H104, D106, and H107 each coordinate Zn(2+). K116 is modified (N6-acetyllysine). Zn(2+) is bound by residues H158 and D182. Substrate is bound by residues 191–193 and 221–223; these read KFY and HEY. H221 contributes to the Zn(2+) binding site. The residue at position 229 (K229) is an N6-acetyllysine; alternate. Residue K229 is modified to N6-succinyllysine; alternate. Position 297-300 (297-300) interacts with substrate; that stretch reads RREK.

Belongs to the metallo-beta-lactamase superfamily. Glyoxalase II family. In terms of assembly, monomer. It depends on Zn(2+) as a cofactor. As to expression, expressed in liver and kidney.

It is found in the mitochondrion matrix. The protein resides in the cytoplasm. The catalysed reaction is an S-(2-hydroxyacyl)glutathione + H2O = a 2-hydroxy carboxylate + glutathione + H(+). The enzyme catalyses (R)-S-lactoylglutathione + H2O = (R)-lactate + glutathione + H(+). The protein operates within secondary metabolite metabolism; methylglyoxal degradation; (R)-lactate from methylglyoxal: step 2/2. In terms of biological role, thiolesterase that catalyzes the hydrolysis of S-D-lactoyl-glutathione to form glutathione and D-lactic acid. In Homo sapiens (Human), this protein is Hydroxyacylglutathione hydrolase, mitochondrial (HAGH).